A 321-amino-acid polypeptide reads, in one-letter code: Pectinesterase (321 aa).

Thr1 bears the N-acetylthreonine mark. N-linked (GlcNAc...) (complex) asparagine glycosylation occurs at Asn75. 2 residues coordinate substrate: Thr84 and Gln114. Asp137 (proton donor) is an active-site residue. A disulfide bridge connects residues Cys151 and Cys171. Asp158 serves as the catalytic Nucleophile. Residues Arg226 and Trp228 each coordinate substrate. 3 N-linked (GlcNAc...) (complex) asparagine glycosylation sites follow: Asn275, Asn290, and Asn319.

The protein belongs to the pectinesterase family. In terms of processing, the N-glycans attached at Asn-75, Asn-275, Asn-290 and Asn-319 are complex oligosaccharides containing xylose, fucose, hexose and N-acetylglucosamine.

The catalysed reaction is [(1-&gt;4)-alpha-D-galacturonosyl methyl ester](n) + n H2O = [(1-&gt;4)-alpha-D-galacturonosyl](n) + n methanol + n H(+). It functions in the pathway glycan metabolism; pectin degradation; 2-dehydro-3-deoxy-D-gluconate from pectin: step 1/5. Inhibited by PMEI. This chain is Pectinesterase, found in Actinidia deliciosa (Kiwi).